The sequence spans 230 residues: Large ribosomal subunit protein uL1 (230 aa).

Belongs to the universal ribosomal protein uL1 family. In terms of assembly, part of the 50S ribosomal subunit.

Its function is as follows. Binds directly to 23S rRNA. The L1 stalk is quite mobile in the ribosome, and is involved in E site tRNA release. Functionally, protein L1 is also a translational repressor protein, it controls the translation of the L11 operon by binding to its mRNA. This is Large ribosomal subunit protein uL1 from Aster yellows witches'-broom phytoplasma (strain AYWB).